A 291-amino-acid chain; its full sequence is Popeye domain-containing protein 3 (291 aa).

Asn4 is a glycosylation site (N-linked (GlcNAc...) asparagine). A run of 3 helical transmembrane segments spans residues 27–44 (GAIY…FMGG), 48–70 (FGLL…WAWV), and 77–99 (IFSW…AYQV).

It belongs to the popeye family. In terms of tissue distribution, expressed predominantly in skeletal muscle (at protein level). Also detected in heart.

It localises to the membrane. May play a role in the maintenance of heart function mediated, at least in part, through cAMP-binding. May play a role in the regulation of KCNK2/TREK-1-mediated current amplitude. In Homo sapiens (Human), this protein is Popeye domain-containing protein 3 (POPDC3).